Consider the following 125-residue polypeptide: Small ribosomal subunit protein eS6 (125 aa).

It belongs to the eukaryotic ribosomal protein eS6 family. As to quaternary structure, part of the 30S ribosomal subunit.

This chain is Small ribosomal subunit protein eS6, found in Thermococcus kodakarensis (strain ATCC BAA-918 / JCM 12380 / KOD1) (Pyrococcus kodakaraensis (strain KOD1)).